The primary structure comprises 272 residues: HMP-PP phosphatase (272 aa).

Catalysis depends on Asp8, which acts as the Nucleophile. Asp8, Asp10, and Asp212 together coordinate Mg(2+).

It belongs to the HAD-like hydrolase superfamily. Cof family. Mg(2+) serves as cofactor.

It catalyses the reaction 4-amino-2-methyl-5-(diphosphooxymethyl)pyrimidine + H2O = 4-amino-2-methyl-5-(phosphooxymethyl)pyrimidine + phosphate + H(+). Functionally, catalyzes the hydrolysis of 4-amino-2-methyl-5-hydroxymethylpyrimidine pyrophosphate (HMP-PP) to 4-amino-2-methyl-5-hydroxymethylpyrimidine phosphate (HMP-P). The protein is HMP-PP phosphatase of Escherichia fergusonii (strain ATCC 35469 / DSM 13698 / CCUG 18766 / IAM 14443 / JCM 21226 / LMG 7866 / NBRC 102419 / NCTC 12128 / CDC 0568-73).